The sequence spans 354 residues: Galactose-1-phosphate uridylyltransferase (354 aa).

Positions 36–72 (TVTTSEVRRDPLLGDSAPSRLAPQGRTYHPPADQCPL) are disordered. 3 residues coordinate Zn(2+): cysteine 70, cysteine 73, and histidine 114. Asparagine 154 is a binding site for UDP-alpha-D-glucose. Residue histidine 165 participates in Zn(2+) binding. The Tele-UMP-histidine intermediate role is filled by histidine 167. UDP-alpha-D-glucose-binding residues include glutamine 169 and glutamine 332.

Belongs to the galactose-1-phosphate uridylyltransferase type 1 family. Requires Zn(2+) as cofactor.

It carries out the reaction alpha-D-galactose 1-phosphate + UDP-alpha-D-glucose = alpha-D-glucose 1-phosphate + UDP-alpha-D-galactose. Its pathway is carbohydrate metabolism; galactose metabolism. This Streptomyces lividans protein is Galactose-1-phosphate uridylyltransferase (galT).